A 239-amino-acid polypeptide reads, in one-letter code: MSQVPAYKRILLKLSGEALMGDDSYGINRTTIEQIVGQIKEVVELGVEVGVVIGGGNIFRGVAPAAAGMDRATADYMGMMATVMNALALKDAMTKAGLIARVQSALTMQQIAEPYVRGKAMQYLEEGKVVIFAAGTGNPFFTTDTAAALRGMEMNVDIMLKATKVDGVYTDDPKKNPDAVRYQSVTFDEAISRNLKVMDATAFALCRDQHLNIKVFSIFKNGALRRVVLGEDEGTLVHC.

13–16 (KLSG) contributes to the ATP binding site. G55 serves as a coordination point for UMP. Residues G56 and R60 each coordinate ATP. UMP is bound by residues D75 and 136–143 (TGNPFFTT). ATP contacts are provided by T163, Y169, and D172.

This sequence belongs to the UMP kinase family. Homohexamer.

It localises to the cytoplasm. The enzyme catalyses UMP + ATP = UDP + ADP. It participates in pyrimidine metabolism; CTP biosynthesis via de novo pathway; UDP from UMP (UMPK route): step 1/1. Its activity is regulated as follows. Inhibited by UTP. Its function is as follows. Catalyzes the reversible phosphorylation of UMP to UDP. This is Uridylate kinase from Chromobacterium violaceum (strain ATCC 12472 / DSM 30191 / JCM 1249 / CCUG 213 / NBRC 12614 / NCIMB 9131 / NCTC 9757 / MK).